A 968-amino-acid chain; its full sequence is RNA polymerase-associated protein RapA (968 aa).

Residues 164 to 334 enclose the Helicase ATP-binding domain; the sequence is EVGQRHAPRV…FARLRLLDPD (171 aa). 177–184 serves as a coordination point for ATP; the sequence is DEVGLGKT. The short motif at 280–283 is the DEAH box element; sequence DEAH. The 155-residue stretch at 490–644 folds into the Helicase C-terminal domain; it reads RVEWLLNYLV…TCPTGRTIYD (155 aa).

Belongs to the SNF2/RAD54 helicase family. RapA subfamily. Interacts with the RNAP. Has a higher affinity for the core RNAP than for the holoenzyme. Its ATPase activity is stimulated by binding to RNAP.

Transcription regulator that activates transcription by stimulating RNA polymerase (RNAP) recycling in case of stress conditions such as supercoiled DNA or high salt concentrations. Probably acts by releasing the RNAP, when it is trapped or immobilized on tightly supercoiled DNA. Does not activate transcription on linear DNA. Probably not involved in DNA repair. The chain is RNA polymerase-associated protein RapA from Yersinia pseudotuberculosis serotype O:1b (strain IP 31758).